A 278-amino-acid polypeptide reads, in one-letter code: E3 ubiquitin-protein ligase MARCHF5 (278 aa).

The RING-CH-type zinc-finger motif lies at 6–75; it reads LQQMLDRSCW…PQCNAEYLIV (70 aa). Positions 14, 17, 33, 35, 43, 46, 65, and 68 each coordinate Zn(2+). 4 helical membrane passes run 99 to 119, 139 to 159, 209 to 229, and 238 to 258; these read FAAA…YGAV, PLFL…GKMI, ILCG…LMFS, and TILG…YFKQ.

As to quaternary structure, monomer and homodimer. Interacts with MFN1, MFN2, DNM1L and FIS1. Post-translationally, autoubiquitinated leading to degradation (short half-life).

The protein resides in the mitochondrion outer membrane. The catalysed reaction is S-ubiquitinyl-[E2 ubiquitin-conjugating enzyme]-L-cysteine + [acceptor protein]-L-lysine = [E2 ubiquitin-conjugating enzyme]-L-cysteine + N(6)-ubiquitinyl-[acceptor protein]-L-lysine.. Its pathway is protein modification; protein ubiquitination. Functionally, mitochondrial E3 ubiquitin-protein ligase that plays a crucial role in the control of mitochondrial morphology by acting as a positive regulator of mitochondrial fission and as an important regulator of immune response. Plays a crucial role in maintaining mitochondrial homeostasis by regulating the dynamics of mitochondria through the ubiquitination of key proteins involved in fission and fusion such as FIS1, DNM1L and MFN1. Acts as a critical determinant of mitotic apoptosis through both MCL1-dependent and -independent pathways. Turns off persistent immune signaling by degrading oligomeric complexes of retinoic acid-inducible gene I/DDX58 and mitochondrial antiviral-signaling protein/MAVS formed upon RNA virus infection. Promotes STING-mediated type-I interferon production via 'Lys-63'-linked ubiquitination of STING1 thereby preserving its activity and preventing the formation of inactive STING1 polymers. Plays also an essential role in the formation of PEX3-containing vesicles in the de novo biogenesis of peroxisomes from mitochondria. Acts as a regulator of NLRP3 inflammasome activation on the mitochondria by mediating the 'Lys-27'-linked polyubiquitination of NLRP3, positively regulating the NLRP3-NEK7 complex formation and NLRP3 oligomerization. The polypeptide is E3 ubiquitin-protein ligase MARCHF5 (MARCHF5) (Bos taurus (Bovine)).